A 602-amino-acid polypeptide reads, in one-letter code: MDSRVSELFGGCCRPGGGPAMGGNLKARGAGGSSSCGGPKGKKKNGRNRGGKANNPPYLPPEAEDGNIEYKLKLVNPSQYRFEHLVTQMKWRLQEGRGEAVYQIGVEDNGLLVGLAEEEMRASLKTLHRMAEKVGADITVLREREVDYDSDVPRKITEVLVRKVPDNQQFLDLRVAVLGNVDSGKSTLLGVLTQGELDNGRGRARLNLFRHLHEIQSGRTSSISFEILGFNSKGEVVNYSDSRTAEEICESSSKMITFIDLAGHHKYLHTTIFGLTSYCPDCALLLVSANTGIAGTTREHLGLALALKVPFFIVVSKVDLCAKTTVERTVRQLERVLKQPGCHKVPMLVTSEDDAVTAAQQFAQSPNVTPIFTLSSVSGESLDLLKVFLNILPPLTNSKEQEELMQQLTEFQVDEIYTVPEVGTVVGGTLSSGICREGDQLVVGPTDDGCFLELRVCSIQRNRSACRVLRAGQAATLALGDFDRALLRKGMVMVSPEMNPTICSVFEAEIVLLFHATTFRRGFQVTVHVGNVRQTAVVEKIHAKDKLRTGEKAVVRFRFLKHPEYLKVGAKLLFREGVTKGIGHVTDVQAITAGEAQATMGF.

Positions 18–64 (GPAMGGNLKARGAGGSSSCGGPKGKKKNGRNRGGKANNPPYLPPEAE) are disordered. Positions 29 to 39 (GAGGSSSCGGP) are enriched in gly residues. Basic residues predominate over residues 40–50 (KGKKKNGRNRG). Residues 170-398 (FLDLRVAVLG…LNILPPLTNS (229 aa)) form the tr-type G domain. GTP-binding positions include 179–186 (GNVDSGKS), 260–264 (DLAGH), and 316–319 (SKVD).

The protein belongs to the TRAFAC class translation factor GTPase superfamily. Classic translation factor GTPase family. GTPBP1 subfamily. Predominantly expressed in thymus, spleen, and testis. Expressed at lower levels in brain, heart, lung, kidney, and skeletal muscle. In testis, specifically expressed in spermatocytes and round spermatids.

The sequence is that of GTP-binding protein 2 from Mus musculus (Mouse).